We begin with the raw amino-acid sequence, 207 residues long: Holliday junction resolvase RecU (207 aa).

The interval 1-30 (MPIRYPNGQPYSRSPKQGQAKKPLPADTYS) is disordered. Mg(2+)-binding residues include T87, D89, E102, and Q121.

The protein belongs to the RecU family. The cofactor is Mg(2+).

It localises to the cytoplasm. It catalyses the reaction Endonucleolytic cleavage at a junction such as a reciprocal single-stranded crossover between two homologous DNA duplexes (Holliday junction).. In terms of biological role, endonuclease that resolves Holliday junction intermediates in genetic recombination. Cleaves mobile four-strand junctions by introducing symmetrical nicks in paired strands. Promotes annealing of linear ssDNA with homologous dsDNA. Required for DNA repair, homologous recombination and chromosome segregation. This chain is Holliday junction resolvase RecU, found in Shouchella clausii (strain KSM-K16) (Alkalihalobacillus clausii).